The following is a 343-amino-acid chain: Methylthioribose-1-phosphate isomerase (343 aa).

Residues 48 to 50 (RGA), Arg88, and Gln193 contribute to the substrate site. The active-site Proton donor is the Asp234. A substrate-binding site is contributed by 244–245 (NK).

This sequence belongs to the eIF-2B alpha/beta/delta subunits family. MtnA subfamily.

The catalysed reaction is 5-(methylsulfanyl)-alpha-D-ribose 1-phosphate = 5-(methylsulfanyl)-D-ribulose 1-phosphate. It functions in the pathway amino-acid biosynthesis; L-methionine biosynthesis via salvage pathway; L-methionine from S-methyl-5-thio-alpha-D-ribose 1-phosphate: step 1/6. Catalyzes the interconversion of methylthioribose-1-phosphate (MTR-1-P) into methylthioribulose-1-phosphate (MTRu-1-P). The protein is Methylthioribose-1-phosphate isomerase of Thermotoga maritima (strain ATCC 43589 / DSM 3109 / JCM 10099 / NBRC 100826 / MSB8).